The primary structure comprises 501 residues: MPFSADSVTSLRQLADALAARTVSAEELAREYLARIEQAAALNAFIHVDAELTLAQARAADERRARGEAAPLTGVPVAHKDVFVTRGWRATAGSKMLGNYESPFDATVVERMAAAGMVTLGKTNMDEFAMGSSNENSHFGPVRNPWDAGRVPGGSSGGSAAAVAAGLAPAATGTDTGGSIRQPASFSGITGIKPTYGRVSRYGMIAFASSLDQGGPMAHTAEDCALLLNAMAGFDPKDSTSIPPAQGGVDEDYTRLLGQPRAGATAERPLAGLRIGLPREYFGKGLSADVEQAVRAALAEYEKLGATLVEVSLPKTELSIPVYYVIAPAEASSNLSRFDGVRYGHRAAEYRDLLDMYKKTRAEGFGAEVKRRILVGTYVLSHGYYDAYYLQAQKIRRIIADDFQRAFAQCDVIMGPVAPTVAWKLGEKTSDPVQMYLADIFTLSTSLAGLPGMSVPCGFGEGNMPVGLQLIGNYFDEARLLQAAHAFQQATDWHLRRPAKA.

Residues Lys80 and Ser155 each act as charge relay system in the active site. Ser179 functions as the Acyl-ester intermediate in the catalytic mechanism.

It belongs to the amidase family. GatA subfamily. In terms of assembly, heterotrimer of A, B and C subunits.

The enzyme catalyses L-glutamyl-tRNA(Gln) + L-glutamine + ATP + H2O = L-glutaminyl-tRNA(Gln) + L-glutamate + ADP + phosphate + H(+). In terms of biological role, allows the formation of correctly charged Gln-tRNA(Gln) through the transamidation of misacylated Glu-tRNA(Gln) in organisms which lack glutaminyl-tRNA synthetase. The reaction takes place in the presence of glutamine and ATP through an activated gamma-phospho-Glu-tRNA(Gln). The polypeptide is Glutamyl-tRNA(Gln) amidotransferase subunit A (Cupriavidus taiwanensis (strain DSM 17343 / BCRC 17206 / CCUG 44338 / CIP 107171 / LMG 19424 / R1) (Ralstonia taiwanensis (strain LMG 19424))).